A 369-amino-acid chain; its full sequence is 1-aminocyclopropane-1-carboxylate oxidase homolog 3 (369 aa).

The Fe2OG dioxygenase domain maps to 217 to 318; it reads KGLLMLSHYY…VSVACFFTTG (102 aa). Fe cation contacts are provided by His241, Asp243, and His297.

The protein belongs to the iron/ascorbate-dependent oxidoreductase family. Requires Fe cation as cofactor.

The chain is 1-aminocyclopropane-1-carboxylate oxidase homolog 3 from Arabidopsis thaliana (Mouse-ear cress).